The chain runs to 438 residues: UDP-N-acetyl-D-mannosamine dehydrogenase (438 aa).

Positions 21, 22, 41, 46, 93, and 131 each coordinate NAD(+). Arginine 160, valine 161, lysine 212, asparagine 216, arginine 219, histidine 250, arginine 252, and glycine 263 together coordinate UDP-N-acetyl-alpha-D-mannosaminouronate. Catalysis depends on lysine 212, which acts as the Proton donor/acceptor. Cysteine 266 (nucleophile) is an active-site residue. Residues tyrosine 323 and lysine 324 each contribute to the UDP-N-acetyl-alpha-D-mannosaminouronate site. Residue arginine 331 coordinates NAD(+). A UDP-N-acetyl-alpha-D-mannosaminouronate-binding site is contributed by lysine 409.

This sequence belongs to the UDP-glucose/GDP-mannose dehydrogenase family. As to quaternary structure, homotetramer; probably dimer of dimers.

The catalysed reaction is UDP-N-acetyl-alpha-D-mannosamine + 2 NAD(+) + H2O = UDP-N-acetyl-alpha-D-mannosaminouronate + 2 NADH + 3 H(+). In terms of biological role, catalyzes the four-electron oxidation of UDP-N-acetyl-D-mannosamine (UDP-ManNAc), reducing NAD(+) and releasing UDP-N-acetylmannosaminuronic acid (UDP-ManNAcA). The sequence is that of UDP-N-acetyl-D-mannosamine dehydrogenase (wecC) from Methanococcus aeolicus (strain ATCC BAA-1280 / DSM 17508 / OCM 812 / Nankai-3).